A 43-amino-acid polypeptide reads, in one-letter code: KCNPAGGTVGGCRGVDRRHWISECKAKQSYVRALTMDSDKIVG.

It belongs to the NGF-beta family.

Functionally, NT-4 could play a role in oogenesis and/or early embryogenesis. NT-4 interacts with the low affinity NGF receptor and elicits neurite outgrowth from explanted dorsal root ganglia with no and lower activity in sympathetic and nodose ganglia, respectively. This chain is Neurotrophin-4 (NTF4), found in Macrovipera lebetinus (Levantine viper).